We begin with the raw amino-acid sequence, 1121 residues long: RecBCD enzyme subunit RecC (1121 aa).

It belongs to the RecC family. As to quaternary structure, heterotrimer of RecB, RecC and RecD. All subunits contribute to DNA-binding.

A helicase/nuclease that prepares dsDNA breaks (DSB) for recombinational DNA repair. Binds to DSBs and unwinds DNA via a highly rapid and processive ATP-dependent bidirectional helicase activity. Unwinds dsDNA until it encounters a Chi (crossover hotspot instigator) sequence from the 3' direction. Cuts ssDNA a few nucleotides 3' to the Chi site. The properties and activities of the enzyme are changed at Chi. The Chi-altered holoenzyme produces a long 3'-ssDNA overhang and facilitates RecA-binding to the ssDNA for homologous DNA recombination and repair. Holoenzyme degrades any linearized DNA that is unable to undergo homologous recombination. In the holoenzyme this subunit recognizes the wild-type Chi sequence, and when added to isolated RecB increases its ATP-dependent helicase processivity. The polypeptide is RecBCD enzyme subunit RecC (Haemophilus influenzae (strain ATCC 51907 / DSM 11121 / KW20 / Rd)).